We begin with the raw amino-acid sequence, 131 residues long: MLSRLFAPKVKVSAHCDLPCGVYDPAQARIEAESVKAIQEKMAANDDLHFQIRATVIKEQRAELAKHHLDVLWSDYFKPPHFESYPELHTLVNEAVKALSAAKASTDPATGQKALDYIAQIDKIFWETKKA.

The propeptide occupies 1 to 14 (MLSRLFAPKVKVSA). Ni(2+) is bound by residues His15, Cys16, and Cys20.

Belongs to the nickel superoxide dismutase family. As to quaternary structure, homohexamer. The hexameric protein has roughly the shape of a hollow sphere with an outer diameter of 72 Angstroms and a large inner cavity. Requires Ni(2+) as cofactor.

The protein localises to the cytoplasm. The enzyme catalyses 2 superoxide + 2 H(+) = H2O2 + O2. The chain is Superoxide dismutase [Ni] (sodN) from Streptomyces seoulensis.